We begin with the raw amino-acid sequence, 204 residues long: Large ribosomal subunit protein uL3 (204 aa).

This sequence belongs to the universal ribosomal protein uL3 family. In terms of assembly, part of the 50S ribosomal subunit. Forms a cluster with proteins L14 and L19.

Functionally, one of the primary rRNA binding proteins, it binds directly near the 3'-end of the 23S rRNA, where it nucleates assembly of the 50S subunit. The sequence is that of Large ribosomal subunit protein uL3 from Azobacteroides pseudotrichonymphae genomovar. CFP2.